The primary structure comprises 250 residues: uncharacterized protein (250 aa).

This is an uncharacterized protein from Bacillus subtilis (strain 168).